The following is a 357-amino-acid chain: Intracellular hyaluronan-binding protein 4 (357 aa).

Disordered stretches follow at residues 56–116 (VVAR…HKTA), 150–186 (ERPRGCGRGRGGMQGRGRGGGINKSFDGFDQRGKREF), and 313–357 (PGCG…PALT). The segment covering 96–115 (PKQEECGGKDNSRAEKEHKT) has biased composition (basic and acidic residues). Residues 155-171 (CGRGRGGMQGRGRGGGI) are compositionally biased toward gly residues. Over residues 176–186 (DGFDQRGKREF) the composition is skewed to basic and acidic residues. Over residues 348–357 (DDPEDFPALT) the composition is skewed to acidic residues.

The protein belongs to the SERBP1-HABP4 family. As to quaternary structure, associates with ribosomes; promoting ribosome stabilization. Interacts with EEF2/eEF2; promoting ribosome stabilization.

The protein resides in the nucleus. Its subcellular location is the cytoplasm. It is found in the stress granule. The protein localises to the sarcoplasm. It localises to the nuclear body. The protein resides in the nucleolus. Its subcellular location is the nucleus speckle. It is found in the cajal body. The protein localises to the gem. Functionally, ribosome-binding protein that promotes ribosome hibernation, a process during which ribosomes are stabilized in an inactive state and preserved from proteasomal degradation. Acts via its association with EEF2/eEF2 factor at the A-site of the ribosome, promoting ribosome stabilization in an inactive state compatible with storage. Plays a key role in ribosome hibernation in the mature egg by promoting ribosome stabilization. Ribosomes, which are produced in large quantities during oogenesis, are stored and translationally repressed in the egg and early embryo. The sequence is that of Intracellular hyaluronan-binding protein 4 from Gallus gallus (Chicken).